The primary structure comprises 116 residues: Host transcription reprogramming factor 4 (116 aa).

An N-terminal signal peptide occupies residues 1–24; that stretch reads MHIIHISKFMALLAISTIAIPTRG. Residues 24-53 form a disordered region; sequence GRSEVDSRDVNQAQTVTSGSSIAPSGSEKR. Positions 33–47 are enriched in polar residues; sequence VNQAQTVTSGSSIAP. The segment at 74–96 adopts a C2H2-type; degenerate zinc-finger fold; the sequence is FQCPHCKDGISNRVALYTHVKAF.

The protein resides in the secreted. It localises to the host nucleus. Probable secreted effector that translocates into the nuclei of host cells to reprogram the expression of targeted genes by binding on effector binding elements in rice. This Pyricularia oryzae (strain 70-15 / ATCC MYA-4617 / FGSC 8958) (Rice blast fungus) protein is Host transcription reprogramming factor 4.